The sequence spans 230 residues: uncharacterized protein (230 aa).

Residues L7 to G23 traverse the membrane as a helical segment. The disordered stretch occupies residues K27–N230. Low complexity predominate over residues A50 to A59. Over residues A60 to D83 the composition is skewed to basic and acidic residues. Basic residues predominate over residues K101 to K112. The span at K113–P173 shows a compositional bias: basic and acidic residues. Residues E199–A210 are compositionally biased toward acidic residues. Over residues E211 to N230 the composition is skewed to basic and acidic residues.

It is found in the membrane. This is an uncharacterized protein from Caenorhabditis elegans.